The sequence spans 127 residues: Mitochondrial pyruvate carrier 2 (127 aa).

The Mitochondrial matrix segment spans residues 2–40; that stretch reads AAAGARGLRATYHRLMDKVELLLPKKLRPLYNHPAGPRT. Lys26 bears the N6-acetyllysine mark. Residues 41–61 traverse the membrane as a helical segment; the sequence is VFFWAPIMKWGLVCAGLADMA. Residues 62 to 72 are Mitochondrial intermembrane-facing; it reads RPAEKLSTAQS. The chain crosses the membrane as a helical span at residues 73-90; it reads TVLMATGFIWSRYSLVII. The Mitochondrial matrix portion of the chain corresponds to 91–95; the sequence is PKNWS. A helical membrane pass occupies residues 96-115; it reads LFAVNFFVGSAGASQLFRIW. The Mitochondrial intermembrane segment spans residues 116-127; that stretch reads KYNQELKSKGIQ.

Belongs to the mitochondrial pyruvate carrier (MPC) (TC 2.A.105) family. As to quaternary structure, homodimer. Homooligomer. Forms heterodimers with MPC1 and MPC1L. The heterodimer is the more stable and dominant form. In terms of tissue distribution, liver, kidney, and brain.

It is found in the mitochondrion inner membrane. The enzyme catalyses pyruvate(out) + H(+)(out) = pyruvate(in) + H(+)(in). Its function is as follows. Mediates the uptake of pyruvate into mitochondria. The sequence is that of Mitochondrial pyruvate carrier 2 (Mpc2) from Rattus norvegicus (Rat).